The primary structure comprises 413 residues: Alpha-1-antitrypsin 1-5 (413 aa).

An N-terminal signal peptide occupies residues Met-1–Ala-24. N-linked (GlcNAc...) asparagine glycosylation is found at Asn-64, Asn-101, and Asn-265. The interval Ala-368–Arg-387 is RCL.

It belongs to the serpin family.

Its subcellular location is the secreted. Does not inhibit elastase or chymotrypsin. No target protease has been identified to date. The sequence is that of Alpha-1-antitrypsin 1-5 (Serpina1e) from Mus musculus (Mouse).